Consider the following 459-residue polypeptide: Spermidine/putrescine import ATP-binding protein PotA (459 aa).

One can recognise an ABC transporter domain in the interval 15 to 334; the sequence is IELIDIVKQF…PRNIWVAKFI (320 aa). Residue 47–54 participates in ATP binding; that stretch reads GPSGSGKT. The insert stretch occupies residues 115 to 203; the sequence is RVPKENVKKE…EEFKNKYFKR (89 aa).

Belongs to the ABC transporter superfamily. Spermidine/putrescine importer (TC 3.A.1.11.1) family. In terms of assembly, the complex is composed of two ATP-binding proteins (PotA), two transmembrane proteins (PotB and PotC) and a solute-binding protein (PotD).

The protein localises to the cell membrane. The catalysed reaction is ATP + H2O + polyamine-[polyamine-binding protein]Side 1 = ADP + phosphate + polyamineSide 2 + [polyamine-binding protein]Side 1.. Its function is as follows. Part of the ABC transporter complex PotABCD involved in spermidine/putrescine import. Responsible for energy coupling to the transport system. This is Spermidine/putrescine import ATP-binding protein PotA from Mycoplasmopsis synoviae (strain 53) (Mycoplasma synoviae).